The sequence spans 196 residues: Rac-like GTP-binding protein RAC9 (196 aa).

Residue 13–20 coordinates GTP; that stretch reads GDGAVGKT. The Effector region signature appears at 35-43; sequence YVPTVFDNF. Residues 60-64 and 118-121 each bind GTP; these read DTAGQ and TKLD. Cysteine 193 is modified (cysteine methyl ester). The S-geranylgeranyl cysteine moiety is linked to residue cysteine 193. A propeptide spans 194–196 (removed in mature form); sequence AFL.

This sequence belongs to the small GTPase superfamily. Rho family.

It localises to the cytoplasm. The protein localises to the membrane. Its function is as follows. Inactive GDP-bound Rho GTPases reside in the cytosol, are found in a complex with Rho GDP-dissociation inhibitors (Rho GDIs), and are released from the GDI protein in order to translocate to membranes upon activation. The protein is Rac-like GTP-binding protein RAC9 (RAC9) of Gossypium hirsutum (Upland cotton).